The following is a 156-amino-acid chain: Transcription elongation factor GreA (156 aa).

Residues 2–27 are a coiled coil; it reads EKTFPMTKEGLDKLKAELENLKLVKR.

Belongs to the GreA/GreB family.

Its function is as follows. Necessary for efficient RNA polymerase transcription elongation past template-encoded arresting sites. The arresting sites in DNA have the property of trapping a certain fraction of elongating RNA polymerases that pass through, resulting in locked ternary complexes. Cleavage of the nascent transcript by cleavage factors such as GreA or GreB allows the resumption of elongation from the new 3'terminus. GreA releases sequences of 2 to 3 nucleotides. This Lactococcus lactis subsp. cremoris (strain MG1363) protein is Transcription elongation factor GreA.